A 526-amino-acid polypeptide reads, in one-letter code: MTSFFDSESPSNVAEYSVSELSGSIKRTIEQTFEHVRVRGEISGYRGPHSSGHAYFTLKDDRARIDAVVWKGTFARLKFRPEEGMEVIATGRVTTFPGSSKYQVVIDALEPAGAGALMALIEERKRKLAAEGLFDAGRKRPLPFMPKVIGVVTSPTGAVIRDILHRIADRFPVHVLVWPVRVQGDGACEEIVAAIEGFNALQPGGPIARPDVLIVARGGGSLEDLWCFNDEAMVRAAAGSAIPLISAVGHETDWTLIDHAADQRAPTPTGAAEMAVPVKADLEAQLASLSARLKGAAVRQMDNRRQTLRSLARALPSLDQLLALPRRRFDEAAAGLGRGLQMNTANKRRSFERSAAHLRPDLLTARIVDRRQRVVDAVNRAERIVERQVHRGAARVASADASLRALPSRLIGQVHRASDRVSAMSRRADAAIAADLRRLKSAVAAQDRVLQSLSYRNVLQRGFALVRDAAGEPVKQAAAVHSGMALSVEFADGRVAAVAGEDGTPSQAPKKRPARAGEPTKQGSLF.

Residues 499 to 526 (AGEDGTPSQAPKKRPARAGEPTKQGSLF) are disordered.

This sequence belongs to the XseA family. Heterooligomer composed of large and small subunits.

The protein localises to the cytoplasm. It carries out the reaction Exonucleolytic cleavage in either 5'- to 3'- or 3'- to 5'-direction to yield nucleoside 5'-phosphates.. Bidirectionally degrades single-stranded DNA into large acid-insoluble oligonucleotides, which are then degraded further into small acid-soluble oligonucleotides. This Sinorhizobium medicae (strain WSM419) (Ensifer medicae) protein is Exodeoxyribonuclease 7 large subunit.